The primary structure comprises 361 residues: Peptide chain release factor 1 (361 aa).

The residue at position 236 (Q236) is an N5-methylglutamine. Residues 286-306 (AADSQRAEARKGQVGSGDRSE) form a disordered region.

Belongs to the prokaryotic/mitochondrial release factor family. Post-translationally, methylated by PrmC. Methylation increases the termination efficiency of RF1.

Its subcellular location is the cytoplasm. Peptide chain release factor 1 directs the termination of translation in response to the peptide chain termination codons UAG and UAA. The chain is Peptide chain release factor 1 from Magnetococcus marinus (strain ATCC BAA-1437 / JCM 17883 / MC-1).